Reading from the N-terminus, the 380-residue chain is Histidinol-phosphate aminotransferase (380 aa).

K235 carries the post-translational modification N6-(pyridoxal phosphate)lysine.

This sequence belongs to the class-II pyridoxal-phosphate-dependent aminotransferase family. Histidinol-phosphate aminotransferase subfamily. Homodimer. Pyridoxal 5'-phosphate serves as cofactor.

It carries out the reaction L-histidinol phosphate + 2-oxoglutarate = 3-(imidazol-4-yl)-2-oxopropyl phosphate + L-glutamate. The protein operates within amino-acid biosynthesis; L-histidine biosynthesis; L-histidine from 5-phospho-alpha-D-ribose 1-diphosphate: step 7/9. This chain is Histidinol-phosphate aminotransferase, found in Rhodococcus opacus (strain B4).